The sequence spans 346 residues: Uracil-DNA glycosylase (346 aa).

The tract at residues 1 to 105 (MSGKITDFFE…KLKNEEKSEE (105 aa)) is disordered. The span at 20–29 (AENKDNDKEL) shows a compositional bias: basic and acidic residues. Over residues 30-42 (TSTTTTTTTTSTT) the composition is skewed to low complexity. Residues 43–64 (SKKKVAAAPKKKAAVASKKRKH) show a composition bias toward basic residues. The span at 67–86 (SDEETDKEEQQNDDDDDGEE) shows a compositional bias: acidic residues. Aspartate 186 serves as the catalytic Proton acceptor.

Belongs to the uracil-DNA glycosylase (UDG) superfamily. UNG family.

It is found in the mitochondrion. It localises to the nucleus. It carries out the reaction Hydrolyzes single-stranded DNA or mismatched double-stranded DNA and polynucleotides, releasing free uracil.. Functionally, excises uracil residues from the DNA which can arise as a result of misincorporation of dUMP residues by DNA polymerase or due to deamination of cytosine. In Dictyostelium discoideum (Social amoeba), this protein is Uracil-DNA glycosylase (uglA).